Consider the following 571-residue polypeptide: MKLTRAQHASLYGPTVGDKVRLADTDLLLEIEKDYTVYGDECKFGGGKVLRDGMGQSAVYTRDEGVLDLIITNATIIDYTGIVKADIGIKDGHIVGIGKGGNPDIMDGVESHMIVGASTEAIAGEGLIVTAGGIDAHIHFISPQQIDVAIASGITTMLGGGTGPATGTKATTCTPGKWNIERMLEAADAFPVNLGFLGKGNASTPAPLREQIEAGAIGLKLHEDWGTTPAAIRTCLSVADRMDVQVAIHTDTLNEAGFVEDTIKAIGDRVIHTYHTEGAGGGHAPDIMKVAGLPNVLPSSTNPTRPFTVNTIDEHLDMLMVCHHLDPNVPEDVAFADSRIRPETIAAEDILQDLGVISMISSDSQAMGRVGEVIIRTWQTADKMKKQRGALAEDQGKGNDNVRIKRYVSKYTINPAITHGIDDYVGSVEVGKLADLVLWDPRFFGVKPELILKGGLIAYSQMGDPNASIPTPQPVFSRPMFGSFGRARGTTSITFLSKAAMDLGVHEALGLQKKIAHVKNCRSISKRSMKYNDATPNIEIDPETYEVKVDGEMITCKPFEEVALAQRYFLF.

A Urease domain is found at 132 to 571 (GGIDAHIHFI…VALAQRYFLF (440 aa)). Ni(2+) contacts are provided by histidine 137, histidine 139, and lysine 220. Lysine 220 is subject to N6-carboxylysine. A substrate-binding site is contributed by histidine 222. Residues histidine 249 and histidine 275 each contribute to the Ni(2+) site. Histidine 323 functions as the Proton donor in the catalytic mechanism. Position 363 (aspartate 363) interacts with Ni(2+).

It belongs to the metallo-dependent hydrolases superfamily. Urease alpha subunit family. As to quaternary structure, heterotrimer of UreA (gamma), UreB (beta) and UreC (alpha) subunits. Three heterotrimers associate to form the active enzyme. Ni cation serves as cofactor. Post-translationally, carboxylation allows a single lysine to coordinate two nickel ions.

Its subcellular location is the cytoplasm. It carries out the reaction urea + 2 H2O + H(+) = hydrogencarbonate + 2 NH4(+). Its pathway is nitrogen metabolism; urea degradation; CO(2) and NH(3) from urea (urease route): step 1/1. In Halalkalibacterium halodurans (strain ATCC BAA-125 / DSM 18197 / FERM 7344 / JCM 9153 / C-125) (Bacillus halodurans), this protein is Urease subunit alpha.